The sequence spans 235 residues: uncharacterized protein (235 aa).

A run of 2 helical transmembrane segments spans residues 167-187 (AFKLAILVTPFVETLSWLNEL) and 190-210 (LFAYCPAELSLSLFFLCLLLW).

It is found in the membrane. This is an uncharacterized protein from Saccharomyces cerevisiae (strain ATCC 204508 / S288c) (Baker's yeast).